The following is a 178-amino-acid chain: Nicotinamide-nucleotide adenylyltransferase (178 aa).

It belongs to the archaeal NMN adenylyltransferase family. In terms of assembly, homohexamer.

The protein localises to the cytoplasm. It catalyses the reaction beta-nicotinamide D-ribonucleotide + ATP + H(+) = diphosphate + NAD(+). The protein operates within cofactor biosynthesis; NAD(+) biosynthesis; NAD(+) from nicotinamide D-ribonucleotide: step 1/1. The chain is Nicotinamide-nucleotide adenylyltransferase from Methanothermobacter thermautotrophicus (strain ATCC 29096 / DSM 1053 / JCM 10044 / NBRC 100330 / Delta H) (Methanobacterium thermoautotrophicum).